The chain runs to 43 residues: Protein PsbN (43 aa).

A helical membrane pass occupies residues 7–29; sequence IVIFVSSLLLGITTYSVYTAFGP.

Belongs to the PsbN family.

It is found in the plastid. The protein resides in the chloroplast thylakoid membrane. Its function is as follows. May play a role in photosystem I and II biogenesis. This chain is Protein PsbN, found in Phaeodactylum tricornutum (strain CCAP 1055/1).